The chain runs to 219 residues: Large ribosomal subunit protein uL1 (219 aa).

Belongs to the universal ribosomal protein uL1 family. As to quaternary structure, part of the 50S ribosomal subunit.

Its function is as follows. Binds directly to 23S rRNA. Probably involved in E site tRNA release. Functionally, protein L1 is also a translational repressor protein, it controls the translation of its operon by binding to its mRNA. This chain is Large ribosomal subunit protein uL1, found in Pyrococcus horikoshii (strain ATCC 700860 / DSM 12428 / JCM 9974 / NBRC 100139 / OT-3).